Consider the following 177-residue polypeptide: Large ribosomal subunit protein uL6 (177 aa).

The segment at 151–177 (YRPPEPYKGKGIRYSDEHVVRKEAKKK) is disordered. The span at 155–177 (EPYKGKGIRYSDEHVVRKEAKKK) shows a compositional bias: basic and acidic residues.

This sequence belongs to the universal ribosomal protein uL6 family. As to quaternary structure, part of the 50S ribosomal subunit.

Functionally, this protein binds to the 23S rRNA, and is important in its secondary structure. It is located near the subunit interface in the base of the L7/L12 stalk, and near the tRNA binding site of the peptidyltransferase center. This Psychrobacter sp. (strain PRwf-1) protein is Large ribosomal subunit protein uL6.